Consider the following 382-residue polypeptide: Alcohol dehydrogenase 4 (382 aa).

NAD(+) is bound by residues aspartate 40, asparagine 72, glycine 99, serine 100, threonine 139, threonine 140, threonine 148, phenylalanine 150, lysine 161, and glycine 183. Positions 195, 199, and 264 each coordinate Fe(2+). NAD(+) is bound by residues histidine 268 and histidine 278. Position 278 (histidine 278) interacts with Fe(2+).

Belongs to the iron-containing alcohol dehydrogenase family. Homodimer. Zn(2+) is required as a cofactor. Requires Fe(2+) as cofactor.

Its subcellular location is the mitochondrion. The catalysed reaction is a primary alcohol + NAD(+) = an aldehyde + NADH + H(+). It carries out the reaction ethanol + NAD(+) = acetaldehyde + NADH + H(+). Inhibited by EDTA. Its function is as follows. Alcohol dehydrogenase specific for ethanol. Acts mainyl as a mitochondrial formaldehyde dehydrogenase and has no effect on ethanol production. Shows drastically reduced activity towards primary alcohols from 4 carbon atoms upward. Isomers of aliphatic alcohol, as well as secondary alcohols and glycerol are not used at all. The role of ADH4 in yeast metabolism is not yet known, but ADH4 is not responsible for the production of ethanol during growth on glucose nor responsible for the oxidation of ethanol to acetaldehyde. This chain is Alcohol dehydrogenase 4, found in Saccharomyces cerevisiae (strain ATCC 204508 / S288c) (Baker's yeast).